The chain runs to 153 residues: uncharacterized protein (153 aa).

Residues 19 to 46 (EKSTRLEEDAMESEPLAGTKTRGRGRRR) are disordered.

This is an uncharacterized protein from Homo sapiens (Human).